The sequence spans 283 residues: (+)-borneol dehydrogenase 2 (283 aa).

NAD(+)-binding positions include 27–33 (GGSSGIG), aspartate 51, 76–77 (DV), and 103–105 (NAG). Residue serine 157 is the Proton donor of the active site. Positions 170, 174, and 205 each coordinate NAD(+). Tyrosine 170 serves as the catalytic Proton acceptor. The Proton donor/acceptor role is filled by lysine 174.

This sequence belongs to the short-chain dehydrogenases/reductases (SDR) family.

It catalyses the reaction (1R,2S,4R)-borneol + NAD(+) = (1R,4R)-camphor + NADH + H(+). In terms of biological role, involved in the biosynthesis of monoterpene natural products related to camphor. Catalayzes the oxidation of (+)-borneol to (+)-camphor. Shows absolute selectivity towards (+)-borneol. Catalyzes the oxidation of (+)-isoborneol to (-)-camphor. Shows absolute selectivity towards (+)-isoborneol. In Salvia officinalis (Sage), this protein is (+)-borneol dehydrogenase 2.